A 211-amino-acid chain; its full sequence is Large ribosomal subunit protein uL4 (211 aa).

A disordered region spans residues 42 to 87 (AHMRQGTASTLTRSEVRGGGRKPYKQKGTGRARQGSVRTPLRPGGG). Basic residues predominate over residues 60–71 (GGRKPYKQKGTG).

This sequence belongs to the universal ribosomal protein uL4 family. Part of the 50S ribosomal subunit.

Its function is as follows. One of the primary rRNA binding proteins, this protein initially binds near the 5'-end of the 23S rRNA. It is important during the early stages of 50S assembly. It makes multiple contacts with different domains of the 23S rRNA in the assembled 50S subunit and ribosome. Functionally, forms part of the polypeptide exit tunnel. The chain is Large ribosomal subunit protein uL4 from Synechococcus sp. (strain CC9902).